Here is a 921-residue protein sequence, read N- to C-terminus: Isoleucine--tRNA ligase (921 aa).

A 'HIGH' region motif is present at residues 57 to 67 (PYANGELHMGH). L-isoleucyl-5'-AMP is bound at residue glutamate 552. The short motif at 593–597 (KMSKS) is the 'KMSKS' region element. Position 596 (lysine 596) interacts with ATP. Residues cysteine 888, cysteine 891, cysteine 908, and cysteine 911 each coordinate Zn(2+).

This sequence belongs to the class-I aminoacyl-tRNA synthetase family. IleS type 1 subfamily. Monomer. Zn(2+) serves as cofactor.

It is found in the cytoplasm. It catalyses the reaction tRNA(Ile) + L-isoleucine + ATP = L-isoleucyl-tRNA(Ile) + AMP + diphosphate. Its function is as follows. Catalyzes the attachment of isoleucine to tRNA(Ile). As IleRS can inadvertently accommodate and process structurally similar amino acids such as valine, to avoid such errors it has two additional distinct tRNA(Ile)-dependent editing activities. One activity is designated as 'pretransfer' editing and involves the hydrolysis of activated Val-AMP. The other activity is designated 'posttransfer' editing and involves deacylation of mischarged Val-tRNA(Ile). The protein is Isoleucine--tRNA ligase of Listeria monocytogenes serovar 1/2a (strain ATCC BAA-679 / EGD-e).